The primary structure comprises 69 residues: Guanine nucleotide-binding protein G(I)/G(S)/G(O) subunit gamma-T2 (69 aa).

Cys66 bears the Cysteine methyl ester mark. The S-farnesyl cysteine moiety is linked to residue Cys66. The propeptide at 67–69 (IIS) is removed in mature form.

It belongs to the G protein gamma family. As to quaternary structure, g proteins are composed of 3 units, alpha, beta and gamma.

Its subcellular location is the cell membrane. Guanine nucleotide-binding proteins (G proteins) are involved as a modulator or transducer in various transmembrane signaling systems. The beta and gamma chains are required for the GTPase activity, for replacement of GDP by GTP, and for G protein-effector interaction. The polypeptide is Guanine nucleotide-binding protein G(I)/G(S)/G(O) subunit gamma-T2 (GNGT2) (Bos taurus (Bovine)).